The following is a 354-amino-acid chain: MKVAILGAGCYRTHAASGITNFSRAAQVAKEAGMPEIAMTHSTITMGAELLHLIPEITEVVVSDPCFGEEPGMIVLDQFDYKAVMEAHLAGEAEKVMPEIRAAVTAKAKETPKPPKGCIHFVHPETIGLKVTASDVEAVKDADIVITWLPKGGSQPAIIEKFASEIKKGAIVTHACTIPTPKFAKIFKDLGRDDLNIIAYHPGAVPENKGQAFLSEGLADAEKVEEFYCIAKAARGEAFKMPAKLISPVCDMGSAVTAPVYAGILAYRDAVTQILGAPADFAQMMADEAITQLLDLMRSEGIKNMEDKLNPKALTGTADSMCFGPLADILPASLKVLEKHANENKCECGNSIKP.

The protein belongs to the HMD family.

The catalysed reaction is 5,10-methenyl-5,6,7,8-tetrahydromethanopterin + H2 = 5,10-methylenetetrahydromethanopterin + H(+). The protein operates within one-carbon metabolism; methanogenesis from CO(2); 5,10-methylene-5,6,7,8-tetrahydromethanopterin from 5,10-methenyl-5,6,7,8-tetrahydromethanopterin (hydrogen route): step 1/1. Catalyzes the reversible reduction of methenyl-H(4)MPT(+) to methylene-H(4)MPT. This chain is 5,10-methenyltetrahydromethanopterin hydrogenase, found in Methanococcus maripaludis (strain C7 / ATCC BAA-1331).